A 235-amino-acid polypeptide reads, in one-letter code: Orotidine 5'-phosphate decarboxylase (235 aa).

Substrate-binding positions include aspartate 12, lysine 34, 61–70, threonine 116, arginine 177, glutamine 186, and arginine 207; that span reads DMKLLDIDNT. Lysine 63 serves as the catalytic Proton donor.

The protein belongs to the OMP decarboxylase family. Type 1 subfamily. In terms of assembly, homodimer.

It catalyses the reaction orotidine 5'-phosphate + H(+) = UMP + CO2. It functions in the pathway pyrimidine metabolism; UMP biosynthesis via de novo pathway; UMP from orotate: step 2/2. Its function is as follows. Catalyzes the decarboxylation of orotidine 5'-monophosphate (OMP) to uridine 5'-monophosphate (UMP). This is Orotidine 5'-phosphate decarboxylase from Rhizobium leguminosarum bv. trifolii (strain WSM2304).